A 288-amino-acid chain; its full sequence is F420-non-reducing hydrogenase vhu subunit G (288 aa).

Belongs to the [NiFe]/[NiFeSe] hydrogenase small subunit family. The F420-non-reducing hydrogenase vhu is composed of four subunits; VhuA, VhuD, VhuG and VhuU.

This is F420-non-reducing hydrogenase vhu subunit G (vhuG) from Methanocaldococcus jannaschii (strain ATCC 43067 / DSM 2661 / JAL-1 / JCM 10045 / NBRC 100440) (Methanococcus jannaschii).